We begin with the raw amino-acid sequence, 228 residues long: Thiamine-phosphate synthase (228 aa).

Residues 57–61 and asparagine 89 contribute to the 4-amino-2-methyl-5-(diphosphooxymethyl)pyrimidine site; that span reads QLRDK. 2 residues coordinate Mg(2+): aspartate 90 and aspartate 109. Serine 128 is a 4-amino-2-methyl-5-(diphosphooxymethyl)pyrimidine binding site. 154–156 is a 2-[(2R,5Z)-2-carboxy-4-methylthiazol-5(2H)-ylidene]ethyl phosphate binding site; that stretch reads TPS. Lysine 157 provides a ligand contact to 4-amino-2-methyl-5-(diphosphooxymethyl)pyrimidine. Residues glycine 185 and 205-206 each bind 2-[(2R,5Z)-2-carboxy-4-methylthiazol-5(2H)-ylidene]ethyl phosphate; that span reads IS.

It belongs to the thiamine-phosphate synthase family. Requires Mg(2+) as cofactor.

The enzyme catalyses 2-[(2R,5Z)-2-carboxy-4-methylthiazol-5(2H)-ylidene]ethyl phosphate + 4-amino-2-methyl-5-(diphosphooxymethyl)pyrimidine + 2 H(+) = thiamine phosphate + CO2 + diphosphate. It catalyses the reaction 2-(2-carboxy-4-methylthiazol-5-yl)ethyl phosphate + 4-amino-2-methyl-5-(diphosphooxymethyl)pyrimidine + 2 H(+) = thiamine phosphate + CO2 + diphosphate. The catalysed reaction is 4-methyl-5-(2-phosphooxyethyl)-thiazole + 4-amino-2-methyl-5-(diphosphooxymethyl)pyrimidine + H(+) = thiamine phosphate + diphosphate. It participates in cofactor biosynthesis; thiamine diphosphate biosynthesis; thiamine phosphate from 4-amino-2-methyl-5-diphosphomethylpyrimidine and 4-methyl-5-(2-phosphoethyl)-thiazole: step 1/1. Its function is as follows. Condenses 4-methyl-5-(beta-hydroxyethyl)thiazole monophosphate (THZ-P) and 2-methyl-4-amino-5-hydroxymethyl pyrimidine pyrophosphate (HMP-PP) to form thiamine monophosphate (TMP). In Roseiflexus castenholzii (strain DSM 13941 / HLO8), this protein is Thiamine-phosphate synthase.